We begin with the raw amino-acid sequence, 202 residues long: Small ribosomal subunit protein uS4 (202 aa).

The segment at 15–42 (LGDLPGLTRKAAKRSYPPGQHGQARRKR) is disordered. The S4 RNA-binding domain maps to 90 to 152 (NRLDNVCFRL…KCSKQLAEGN (63 aa)).

The protein belongs to the universal ribosomal protein uS4 family. As to quaternary structure, part of the 30S ribosomal subunit. Contacts protein S5. The interaction surface between S4 and S5 is involved in control of translational fidelity.

Its function is as follows. One of the primary rRNA binding proteins, it binds directly to 16S rRNA where it nucleates assembly of the body of the 30S subunit. In terms of biological role, with S5 and S12 plays an important role in translational accuracy. This chain is Small ribosomal subunit protein uS4, found in Parasynechococcus marenigrum (strain WH8102).